The chain runs to 464 residues: Leucine-rich repeat-containing protein 34 (464 aa).

Residues Met1–Ser48 are disordered. Residues Ser16–Ser32 are compositionally biased toward low complexity. 2 LRR repeats span residues Ser295–Ala315 and Thr323–Thr345.

In terms of assembly, interacts with NPM1 and NCL.

It localises to the nucleus. The protein localises to the nucleolus. The protein resides in the cytoplasm. Its function is as follows. Highly expressed in stem cells where it may be involved in regulation of pluripotency. In embryonic stem cells (ESCs), important for normal expression of the pluripotency regulators POU5F1/OCT4 and KLF4. Also important for expression of the ectodermal marker gene NES and the endodermal marker gene GATA4. Promotes stem cell proliferation in vitro. The protein is Leucine-rich repeat-containing protein 34 (LRRC34) of Homo sapiens (Human).